The primary structure comprises 470 residues: Amino-acid permease RocC (470 aa).

12 helical membrane-spanning segments follow: residues 18–38 (FMIALGGVIGTGLFLGSGFTI), 44–64 (LGAIAAYIIGGFLMYLVMLCL), 90–110 (GFMIGWLYWFSWANTVGLELT), 119–139 (WLPSVPIWIWCLVFGIVIFLI), 159–179 (VAAIILFIVIGGAAVFGLIDF), 196–216 (GLFPNGVLAVMFTLVMVNFSF), 243–263 (VIWRTLFFFVLAMFVLVAILP), 281–301 (IGIPFSADIMNFVILTAILSV), 338–358 (ALLITLGISGCSLLTSVMAAE), 360–380 (VYLWCISISGMVTVVAWMSIC), 409–429 (LVPILGFCLYGCVLISLIFIP), and 433–453 (IGLYCGVPIIIFCYAYYHLSI).

Belongs to the amino acid-polyamine-organocation (APC) superfamily.

It localises to the cell membrane. Functionally, putative transport protein involved in arginine degradative pathway. Probably transports arginine or ornithine. The polypeptide is Amino-acid permease RocC (rocC) (Bacillus subtilis (strain 168)).